We begin with the raw amino-acid sequence, 209 residues long: Large ribosomal subunit protein uL3 (209 aa).

Belongs to the universal ribosomal protein uL3 family. In terms of assembly, part of the 50S ribosomal subunit. Forms a cluster with proteins L14 and L19.

Functionally, one of the primary rRNA binding proteins, it binds directly near the 3'-end of the 23S rRNA, where it nucleates assembly of the 50S subunit. The sequence is that of Large ribosomal subunit protein uL3 from Clostridium botulinum (strain Okra / Type B1).